We begin with the raw amino-acid sequence, 313 residues long: L-lactate dehydrogenase 1 (313 aa).

NAD(+) is bound by residues Val-15, Asp-36, Lys-41, Tyr-66, and Gly-80–Ala-81. Substrate-binding residues include Gln-83 and Arg-89. NAD(+) contacts are provided by residues Ser-102, Val-119–Asn-121, and Ser-144. Asn-121–Asp-124 contributes to the substrate binding site. Asp-149 to Arg-152 is a binding site for substrate. Beta-D-fructose 1,6-bisphosphate is bound by residues Arg-154 and His-169. His-176 (proton acceptor) is an active-site residue. Tyr-222 carries the post-translational modification Phosphotyrosine. Substrate is bound at residue Thr-231.

This sequence belongs to the LDH/MDH superfamily. LDH family. In terms of assembly, homotetramer.

The protein localises to the cytoplasm. The enzyme catalyses (S)-lactate + NAD(+) = pyruvate + NADH + H(+). It functions in the pathway fermentation; pyruvate fermentation to lactate; (S)-lactate from pyruvate: step 1/1. Its activity is regulated as follows. Allosterically activated by fructose 1,6-bisphosphate (FBP). In terms of biological role, catalyzes the conversion of lactate to pyruvate. This Clostridium acetobutylicum (strain ATCC 824 / DSM 792 / JCM 1419 / IAM 19013 / LMG 5710 / NBRC 13948 / NRRL B-527 / VKM B-1787 / 2291 / W) protein is L-lactate dehydrogenase 1.